The sequence spans 151 residues: D-aminoacyl-tRNA deacylase (151 aa).

Positions 137–138 (GP) match the Gly-cisPro motif, important for rejection of L-amino acids motif.

It belongs to the DTD family. As to quaternary structure, homodimer.

The protein localises to the cytoplasm. The enzyme catalyses glycyl-tRNA(Ala) + H2O = tRNA(Ala) + glycine + H(+). The catalysed reaction is a D-aminoacyl-tRNA + H2O = a tRNA + a D-alpha-amino acid + H(+). In terms of biological role, an aminoacyl-tRNA editing enzyme that deacylates mischarged D-aminoacyl-tRNAs. Also deacylates mischarged glycyl-tRNA(Ala), protecting cells against glycine mischarging by AlaRS. Acts via tRNA-based rather than protein-based catalysis; rejects L-amino acids rather than detecting D-amino acids in the active site. By recycling D-aminoacyl-tRNA to D-amino acids and free tRNA molecules, this enzyme counteracts the toxicity associated with the formation of D-aminoacyl-tRNA entities in vivo and helps enforce protein L-homochirality. This chain is D-aminoacyl-tRNA deacylase, found in Protochlamydia amoebophila (strain UWE25).